A 539-amino-acid polypeptide reads, in one-letter code: MDSQRNILLIALALVSFLLFQQWNVAQNPAPQAVEQAQSGSTLPAPSYADDLDPAPGQVASAKTITVTTDVLTLSIDTVGGDVVTANLNDYSAEFDSEDTFVLLKNEPGHQFIAQSGLVGPQGIDLSSTNRPSYTVSADSFTLAEGQDELRIPMTYQANGLDYTKTFVLKRGSYAIDVEYDVVNNSGNNATFGMYAHLRQNVMDDGGSLTMPTYRGGAYSTEDTRYKKYSFDDMQDRNLSLNLANGQGWAAMIQHYFASAWIPRDEAGSNLYTRVIGNLGDIGVRMPNKTIATGDEASFKATLWVGPKLQDQMAAVAPNLDLVVDYGWLWFIAKPLHTLLSFIQGIVVNWGLAIICLTFIVRGAMYPLTKAQYTSMAKMRMLQPKLTAMRERIGDDRQRMSQEMMELYKKEKVNPLGGCLPILLQMPIFISLYWALMESVELRHSPFFGWITDLSAQDPYYILPLLMGASMFLIQKMSPTTVTDPMQQKIMTFMPVMFTFFFLFFPSGLVLYWLVSNIVTLIQQTLIYRALEKKGLHSK.

The chain crosses the membrane as a helical span at residues 6-26; it reads NILLIALALVSFLLFQQWNVA. Residues 35–44 show a composition bias toward polar residues; the sequence is EQAQSGSTLP. The tract at residues 35 to 55 is disordered; sequence EQAQSGSTLPAPSYADDLDPA. Transmembrane regions (helical) follow at residues 341 to 361, 416 to 436, 454 to 474, and 495 to 515; these read SFIQGIVVNWGLAIICLTFIV, LGGCLPILLQMPIFISLYWAL, LSAQDPYYILPLLMGASMFLI, and PVMFTFFFLFFPSGLVLYWLV.

The protein belongs to the OXA1/ALB3/YidC family. Type 1 subfamily. Interacts with the Sec translocase complex via SecD. Specifically interacts with transmembrane segments of nascent integral membrane proteins during membrane integration.

Its subcellular location is the cell inner membrane. Functionally, required for the insertion and/or proper folding and/or complex formation of integral membrane proteins into the membrane. Involved in integration of membrane proteins that insert both dependently and independently of the Sec translocase complex, as well as at least some lipoproteins. Aids folding of multispanning membrane proteins. The chain is Membrane protein insertase YidC from Vibrio atlanticus (strain LGP32) (Vibrio splendidus (strain Mel32)).